A 400-amino-acid chain; its full sequence is MGGWSSKPRKGMGTNLSVPNPLGFFPDHQLDPAFKANSENPDWDLNPHKDNWPDAHKVGVGAFGPGFTPPHGGLLGWSPQAQGILTSVPAAPPPASTNRQSGRQPTPLSPPLRDTHPQAVQWNSTTFHQTLQDPRVRALYLPAGGSSSGTVSPAQNTVSAISSILSTTGDPVPNMENIASGLLGPLLVLQAGFFSLTKILTIPQSLDSWWTSLNFLGGTPVCLGQNSQSQISSHSPTCCPPICPGYRWMCLRRFIIFLCILLLCLIFLLVLLDYQGMLPVCPLIPGSSTTSTGPCKTCTTPAQGTSMFPSCCCTKPTDGNCTCIPIPSSWAFAKYLWEWASVRFSWLSLLVPFVQWFVGLSPTVWLSVIWMMWFWGPSLYNILSPFMPLLPIFLCLWVYM.

Disordered stretches follow at residues 1–50 (MGGW…PHKD) and 84–116 (ILTS…RDTH). Gly2 is lipidated: N-myristoyl glycine; by host. A pre-S1 region spans residues 2–119 (GGWSSKPRKG…PPLRDTHPQA (118 aa)). Residues 2-174 (GGWSSKPRKG…LSTTGDPVPN (173 aa)) form a pre-S region. The Virion surface; in external conformation segment spans residues 2 to 181 (GGWSSKPRKG…VPNMENIASG (180 aa)). Topologically, residues 2–253 (GGWSSKPRKG…PGYRWMCLRR (252 aa)) are intravirion; in internal conformation. Polar residues predominate over residues 96–106 (STNRQSGRQPT). The interval 120 to 174 (VQWNSTTFHQTLQDPRVRALYLPAGGSSSGTVSPAQNTVSAISSILSTTGDPVPN) is pre-S2. The chain crosses the membrane as a helical span at residues 182-202 (LLGPLLVLQAGFFSLTKILTI). Over 203 to 253 (PQSLDSWWTSLNFLGGTPVCLGQNSQSQISSHSPTCCPPICPGYRWMCLRR) the chain is Intravirion; in external conformation. The chain crosses the membrane as a helical span at residues 254 to 274 (FIIFLCILLLCLIFLLVLLDY). Residues 275 to 348 (QGMLPVCPLI…WASVRFSWLS (74 aa)) lie on the Virion surface side of the membrane. N-linked (GlcNAc...) asparagine; by host glycosylation is present at Asn320. The chain crosses the membrane as a helical span at residues 349-369 (LLVPFVQWFVGLSPTVWLSVI). Residues 370–375 (WMMWFW) are Intravirion-facing. The helical transmembrane segment at 376-398 (GPSLYNILSPFMPLLPIFLCLWV) threads the bilayer. The Virion surface segment spans residues 399–400 (YM).

This sequence belongs to the orthohepadnavirus major surface antigen family. In terms of assembly, li-HBsAg interacts with capsid protein and with HDV Large delta antigen. Isoform M associates with host chaperone CANX through its pre-S2 N glycan. This association may be essential for M proper secretion. Interacts (via its myristoylated pre-S1 region) with the host SLC10A1/NTCP; this interaction is essential for viral entry. Isoform M is N-terminally acetylated by host at a ratio of 90%, and N-glycosylated by host at the pre-S2 region. In terms of processing, myristoylated; this modification is essential for its interaction with the host protein SLC10A1/NTCP.

It is found in the virion membrane. Functionally, the large envelope protein exists in two topological conformations, one which is termed 'external' or Le-HBsAg and the other 'internal' or Li-HBsAg. In its external conformation the protein attaches the virus to cell receptors and thereby initiating infection. This interaction determines the species specificity and liver tropism. This attachment induces virion internalization predominantly through caveolin-mediated endocytosis. The large envelope protein also assures fusion between virion membrane and endosomal membrane. In its internal conformation the protein plays a role in virion morphogenesis and mediates the contact with the nucleocapsid like a matrix protein. Its function is as follows. The middle envelope protein plays an important role in the budding of the virion. It is involved in the induction of budding in a nucleocapsid independent way. In this process the majority of envelope proteins bud to form subviral lipoprotein particles of 22 nm of diameter that do not contain a nucleocapsid. The chain is Large envelope protein from Homo sapiens (Human).